Consider the following 102-residue polypeptide: Small ribosomal subunit protein uS10 (102 aa).

This sequence belongs to the universal ribosomal protein uS10 family. Part of the 30S ribosomal subunit.

Functionally, involved in the binding of tRNA to the ribosomes. In Roseiflexus sp. (strain RS-1), this protein is Small ribosomal subunit protein uS10.